The chain runs to 171 residues: Tetratricopeptide repeat protein 9C (171 aa).

3 TPR repeats span residues 8-41 (AQVY…LRGL), 72-107 (THCY…QPDN), and 108-141 (AKAL…QPKD).

It belongs to the TTC9 family.

The polypeptide is Tetratricopeptide repeat protein 9C (Ttc9c) (Mus musculus (Mouse)).